A 178-amino-acid polypeptide reads, in one-letter code: Prion-like protein doppel (178 aa).

The signal sequence occupies residues 1 to 25 (MRKHLGGCWLAIVCVLLFSQLSSVK). The flexible tail stretch occupies residues 27–50 (RGIKHRIKWNRKVLPSTSQVTEAH). A globular region spans residues 51–154 (TAEIRPGAFI…KHCDFWLERG (104 aa)). Intrachain disulfides connect Cys-94-Cys-147 and Cys-108-Cys-142. N-linked (GlcNAc...) asparagine glycans are attached at residues Asn-98 and Asn-110. The interval 124–141 (KQDNKLYQRVLWQLIREL) is cu(2+) binding. Residue Gly-154 is the site of GPI-anchor amidated glycine attachment. The propeptide at 155–178 (AGLQVTLDQPMMLCLLVFIWFIVK) is removed in mature form.

The protein belongs to the prion family. N-glycosylated. In terms of processing, O-glycosylated. Strongly expressed in testis. Detected at low levels in lymph node, spleen and ovary.

It localises to the cell membrane. Functionally, required for normal acrosome reaction and for normal male fertility. Can bind Cu(2+). This Ovis aries (Sheep) protein is Prion-like protein doppel (PRND).